Consider the following 299-residue polypeptide: MAQNLKDLAGRLPSGPRGMGTALKLLLGAGAVAYGIRESVFTVEGGHRAIFFNRIGGVQQDTILAEGLHFRIPWFQYPIIYDIRARPRKISSPTGSKDLQMVNISLRVLSRPNAMELPSMYQRLGLDYEERVLPSIVNEVLKSVVAKFNASQLITQRAQVSLLIRRELTERAKDFSLILDDVAITELSFSREYTAAVEAKQVAQQEAQRAQFLVEKAKQEQRQKIVQAEGEAEAARMLGEALSKNPGYIKLRKIRAAQNISKTIATSQNRIYLTADNLVLNLQDESFTRGSDSLIKGKK.

Ala-2 is modified (N-acetylalanine). Positions 19–49 (MGTALKLLLGAGAVAYGIRESVFTVEGGHRA) are necessary for transcriptional repression. Residue Tyr-128 is modified to Phosphotyrosine. At Lys-147 the chain carries N6-acetyllysine. Residues 150–174 (ASQLITQRAQVSLLIRRELTERAKD) are necessary for transcriptional repression. Ser-151 carries the post-translational modification Phosphoserine. Residues 190–238 (SREYTAAVEAKQVAQQEAQRAQFLVEKAKQEQRQKIVQAEGEAEAARML) are a coiled coil. N6-acetyllysine occurs at positions 200, 250, and 262.

Belongs to the prohibitin family. In terms of assembly, the mitochondrial prohibitin complex consists of two subunits (PHB1 and PHB2), assembled into a membrane-associated ring-shaped supercomplex of approximately 1 mDa. Interacts with ESR1, HDAC1 and HDAC5. Interacts with ZNF703. Interacts with STOML2. Interacts with ARFGEF3. Interacts with SPHK2. Interacts with COX4I1; the interaction associates PHB2 with COX. Interacts with MAP1LC3B (membrane-bound form LC3-II); the interaction is direct and upon mitochondrial depolarization and proteasome-dependent outer membrane rupture. Interacts with IGFBP6 (via C-terminal domain). Interacts with CLPB. Interacts with CD86 (via cytoplasmic domain); the interactions increases after priming with CD40. Interacts with AFG3L2. Interacts with DNAJC19. Interacts with AKT2; this interaction may be important for myogenic differentiation. In terms of processing, phosphorylated. Tyrosine phosphorylation is indirectly stimulated by IGFBP6.

Its subcellular location is the mitochondrion inner membrane. It localises to the cytoplasm. It is found in the nucleus. The protein localises to the cell membrane. Functionally, protein with pleiotropic attributes mediated in a cell-compartment- and tissue-specific manner, which include the plasma membrane-associated cell signaling functions, mitochondrial chaperone, and transcriptional co-regulator of transcription factors and sex steroid hormones in the nucleus. In the mitochondria, together with PHB, forms large ring complexes (prohibitin complexes) in the inner mitochondrial membrane (IMM) and functions as a chaperone protein that stabilizes mitochondrial respiratory enzymes and maintains mitochondrial integrity in the IMM, which is required for mitochondrial morphogenesis, neuronal survival, and normal lifespan. The prohibitin complex, with DNAJC19, regulates cardiolipin remodeling and the protein turnover of OMA1 in a cardiolipin-binding manner. Also regulates cytochrome-c oxidase assembly (COX) and mitochondrial respiration. Binding to sphingoid 1-phosphate (SPP) modulates its regulator activity. Has a key role of mitophagy receptor involved in targeting mitochondria for autophagic degradation. Involved in mitochondrial-mediated antiviral innate immunity, activates RIG-I-mediated signal transduction and production of IFNB1 and pro-inflammatory cytokine IL6. In terms of biological role, in the nucleus, serves as transcriptional co-regulator. Acts as a mediator of transcriptional repression by nuclear hormone receptors via recruitment of histone deacetylases. Functions as an estrogen receptor (ER)-selective coregulator that potentiates the inhibitory activities of antiestrogens and represses the activity of estrogens. Competes with NCOA1 for modulation of ER transcriptional activity. Its function is as follows. In the plasma membrane, is involved in IGFBP6-induced cell migration. Cooperates with CD86 to mediate CD86-signaling in B lymphocytes that regulates the level of IgG1 produced through the activation of distal signaling intermediates. Upon CD40 engagement, required to activate NF-kappa-B signaling pathway via phospholipase C and protein kinase C activation. This chain is Prohibitin-2 (PHB2), found in Bos taurus (Bovine).